The chain runs to 209 residues: Putative BTB/POZ domain-containing protein At2g40450 (209 aa).

Residues 24 to 98 (ADVRLKAGDS…IYRVDGSICS (75 aa)) enclose the BTB domain.

It functions in the pathway protein modification; protein ubiquitination. In terms of biological role, may act as a substrate-specific adapter of an E3 ubiquitin-protein ligase complex (CUL3-RBX1-BTB) which mediates the ubiquitination and subsequent proteasomal degradation of target proteins. This chain is Putative BTB/POZ domain-containing protein At2g40450, found in Arabidopsis thaliana (Mouse-ear cress).